Reading from the N-terminus, the 39-residue chain is Fuctinin-3 (39 aa).

The tract at residues Lys-1–Ala-39 is disordered.

To human SET/PHAPII protein. As to quaternary structure, oligomer.

The protein resides in the cytoplasm. Its function is as follows. Has a role in the physiological regulation of fucosylation processes. This is Fuctinin-3 from Rattus norvegicus (Rat).